A 216-amino-acid polypeptide reads, in one-letter code: MAGRGGAARPNGPAAGNKICQFKLVLLGESAVGKSSLVLRFVKGQFHEYQESTIGAAFLTQTVCLDDTTVKFEIWDTAGQERYHSLAPMYYRGAQAAIVVYDITNTDTFARAKNWVKELQRQASPNIVIALAGNKADLASKRAVEFQEAQAYADDNSLLFMETSAKTAMNVNEIFMAIAKKLPKNEPQNATGAPGRNRGVDLQENNPASRSQCCSN.

The GTP site is built by Ser-30, Ala-31, Gly-33, Lys-34, Ser-35, Ser-36, His-47, Glu-48, Thr-53, and Gly-79. Residue Ser-35 participates in Mg(2+) binding. 2 short sequence motifs (switch) span residues 45–57 (QFHE…IGAA) and 78–94 (AGQE…YRGA). Mg(2+) is bound at residue Thr-53. The residue at position 85 (Ser-85) is a Phosphoserine; by LRRK2. GTP contacts are provided by Asn-134, Lys-135, Asp-137, Ala-165, and Lys-166. The segment at 185–216 (NEPQNATGAPGRNRGVDLQENNPASRSQCCSN) is disordered. Positions 203–216 (QENNPASRSQCCSN) are enriched in polar residues. Residues Cys-213 and Cys-214 are each lipidated (S-geranylgeranyl cysteine).

The protein belongs to the small GTPase superfamily. Rab family. In terms of assembly, interacts with EEA1. Interacts with INCA1. Interacts with GDI1, GDI2, CHML and CHM; phosphorylation at Ser-85 disrupts this interaction. The cofactor is Mg(2+). Post-translationally, phosphorylation of Ser-85 in the switch II region by LRRK2 prevents the association of RAB regulatory proteins, including CHM, CHML and RAB GDP dissociation inhibitors GDI1 and GDI2. In terms of processing, (Microbial infection) Glycosylated on arginine residues by S.typhimurium protein Ssek3.

The protein localises to the cell membrane. It is found in the early endosome membrane. The protein resides in the melanosome. It carries out the reaction GTP + H2O = GDP + phosphate + H(+). Regulated by guanine nucleotide exchange factors (GEFs) which promote the exchange of bound GDP for free GTP. Regulated by GTPase activating proteins (GAPs) which increase the GTP hydrolysis activity. Inhibited by GDP dissociation inhibitors (GDIs). Functionally, the small GTPases Rab are key regulators of intracellular membrane trafficking, from the formation of transport vesicles to their fusion with membranes. Rabs cycle between an inactive GDP-bound form and an active GTP-bound form that is able to recruit to membranes different sets of downstream effectors directly responsible for vesicle formation, movement, tethering and fusion. This Homo sapiens (Human) protein is Ras-related protein Rab-5C.